A 291-amino-acid chain; its full sequence is ATP synthase gamma chain (291 aa).

It belongs to the ATPase gamma chain family. F-type ATPases have 2 components, CF(1) - the catalytic core - and CF(0) - the membrane proton channel. CF(1) has five subunits: alpha(3), beta(3), gamma(1), delta(1), epsilon(1). CF(0) has three main subunits: a, b and c.

It localises to the cell inner membrane. Produces ATP from ADP in the presence of a proton gradient across the membrane. The gamma chain is believed to be important in regulating ATPase activity and the flow of protons through the CF(0) complex. In Neisseria gonorrhoeae (strain ATCC 700825 / FA 1090), this protein is ATP synthase gamma chain.